The primary structure comprises 167 residues: MQKANIDGKVWRFGKDIDTDLIIAARYLSTSVPEELAKHVMEDADPQFVKKMSSGDIIVAGENFGCGSSREHAPIALKAAGVAAVIAPTFARIFYRNAFNMGLPIFELQESAEIAEGDEISVDMNNGTITNKTSSKVYKFIPIPQFMQELIDAGGLMNFAQNEIKGK.

The protein belongs to the LeuD family. LeuD type 2 subfamily. Heterodimer of LeuC and LeuD.

It catalyses the reaction (2R,3S)-3-isopropylmalate = (2S)-2-isopropylmalate. It functions in the pathway amino-acid biosynthesis; L-leucine biosynthesis; L-leucine from 3-methyl-2-oxobutanoate: step 2/4. Catalyzes the isomerization between 2-isopropylmalate and 3-isopropylmalate, via the formation of 2-isopropylmaleate. The chain is 3-isopropylmalate dehydratase small subunit from Sulfurimonas denitrificans (strain ATCC 33889 / DSM 1251) (Thiomicrospira denitrificans (strain ATCC 33889 / DSM 1251)).